Consider the following 88-residue polypeptide: Small ribosomal subunit protein uS15 (88 aa).

This sequence belongs to the universal ribosomal protein uS15 family. Part of the 30S ribosomal subunit. Forms a bridge to the 50S subunit in the 70S ribosome, contacting the 23S rRNA.

In terms of biological role, one of the primary rRNA binding proteins, it binds directly to 16S rRNA where it helps nucleate assembly of the platform of the 30S subunit by binding and bridging several RNA helices of the 16S rRNA. Forms an intersubunit bridge (bridge B4) with the 23S rRNA of the 50S subunit in the ribosome. This is Small ribosomal subunit protein uS15 from Syntrophus aciditrophicus (strain SB).